We begin with the raw amino-acid sequence, 762 residues long: Subtilisin-like protease SBT3.11 (762 aa).

Residues 1 to 16 (MMSSIVSWWFFWVISA) form the signal peptide. A propeptide spans 17–116 (VCILKVEFNI…VTPNTFYELQ (100 aa)) (activation peptide). An Inhibitor I9 domain is found at 37–115 (VHIVYLGEKE…QVTPNTFYEL (79 aa)). Residues 120-609 (TFDYLGLSHS…GGLVNPNKAA (490 aa)) form the Peptidase S8 domain. Asp-150 (charge relay system) is an active-site residue. N-linked (GlcNAc...) asparagine glycosylation occurs at Asn-206. His-226 serves as the catalytic Charge relay system. Residues Asn-241 and Asn-371 are each glycosylated (N-linked (GlcNAc...) asparagine). Catalysis depends on Ser-540, which acts as the Charge relay system.

This sequence belongs to the peptidase S8 family.

It localises to the secreted. The polypeptide is Subtilisin-like protease SBT3.11 (Arabidopsis thaliana (Mouse-ear cress)).